A 438-amino-acid chain; its full sequence is V-type ATP synthase beta chain (438 aa).

The protein belongs to the ATPase alpha/beta chains family.

Produces ATP from ADP in the presence of a proton gradient across the membrane. The V-type beta chain is a regulatory subunit. The polypeptide is V-type ATP synthase beta chain (atpB) (Chlamydia trachomatis serovar D (strain ATCC VR-885 / DSM 19411 / UW-3/Cx)).